The following is a 37-amino-acid chain: Large ribosomal subunit protein bL36c (37 aa).

Belongs to the bacterial ribosomal protein bL36 family.

The protein localises to the plastid. The protein is Large ribosomal subunit protein bL36c of Cuscuta gronovii (Common dodder).